The following is a 356-amino-acid chain: MLARAARGTGALLLRGSLLASGRAPRRASSGLPRNTVVLFVPQQEAWVVERMGRFHRILEPGLNILIPVLDRIRYVQSLKEIVINVPEQSAVTLDNVTLQIDGVLYLRIMDPYKASYGVEDPEYAVTQLAQTTMRSELGKLSLDKVFRERESLNASIVDAINQAADCWGIRCLRYEIKDIHVPPRVKESMQMQVEAERRKRATVLESEGTRESAINVAEGKKQAQILASEAEKAEQINQAAGEASAVLAKAKAKAEAIRILAAALTQHNGDAAASLTVAEQYVSAFSKLAKDSNTILLPSNPGDVTSMVAQAMGVYGALTKAPVPGTPDSLSSGSSRDVQGTDASLDEELDRVKMS.

The transit peptide at 1–28 (MLARAARGTGALLLRGSLLASGRAPRRA) directs the protein to the mitochondrion. A Phosphoserine; by PKC/PRKCZ modification is found at S17. Y124 bears the Phosphotyrosine mark. K145 is modified (N6-acetyllysine; alternate). Position 145 is an N6-succinyllysine; alternate (K145). The stretch at 215-252 (INVAEGKKQAQILASEAEKAEQINQAAGEASAVLAKAK) forms a coiled coil. K233 carries the N6-acetyllysine modification. The tract at residues 321 to 356 (KAPVPGTPDSLSSGSSRDVQGTDASLDEELDRVKMS) is disordered. Position 327 is a phosphothreonine (T327). Residues 329–343 (DSLSSGSSRDVQGTD) are compositionally biased toward polar residues. S330 carries the post-translational modification Phosphoserine.

It belongs to the band 7/mec-2 family. Forms homooligomers. Interacts with MFN2; may form heterooligomers. Interacts with CACNA2D2. Interacts with PHB1 and PHB2; recruits them to cardiolipin-enriched mitochondrial membranes and stabilizes them. In terms of processing, hyperphosphorylated at Ser-17 in some patients with monoclonal gammopathy of undetermined significance (MGUS), multiple myeloma (MM) and Waldenstrom macroglobulinemia due to impaired dephosphorylation by PP2A. Ubiquitously expressed at low levels. Expressed in lymphoid tissues (at protein level).

Its subcellular location is the cell membrane. The protein localises to the mitochondrion. It is found in the mitochondrion inner membrane. It localises to the mitochondrion intermembrane space. The protein resides in the membrane raft. Its subcellular location is the cytoplasm. The protein localises to the cytoskeleton. Its function is as follows. Mitochondrial protein that probably regulates the biogenesis and the activity of mitochondria. Stimulates cardiolipin biosynthesis, binds cardiolipin-enriched membranes where it recruits and stabilizes some proteins including prohibitin and may therefore act in the organization of functional microdomains in mitochondrial membranes. Through regulation of the mitochondrial function may play a role into several biological processes including cell migration, cell proliferation, T-cell activation, calcium homeostasis and cellular response to stress. May play a role in calcium homeostasis through negative regulation of calcium efflux from mitochondria. Required for mitochondrial hyperfusion a pro-survival cellular response to stress which results in increased ATP production by mitochondria. May also regulate the organization of functional domains at the plasma membrane and play a role in T-cell activation through association with the T-cell receptor signaling complex and its regulation. This is Stomatin-like protein 2, mitochondrial (STOML2) from Homo sapiens (Human).